The chain runs to 278 residues: Large ribosomal subunit protein uL2 (278 aa).

2 disordered regions span residues Met-1–Lys-59 and Arg-222–Arg-278. Over residues Ser-16–Ser-27 the composition is skewed to polar residues. 2 stretches are compositionally biased toward basic residues: residues Val-45–Lys-59 and Val-269–Arg-278.

This sequence belongs to the universal ribosomal protein uL2 family. As to quaternary structure, part of the 50S ribosomal subunit. Forms a bridge to the 30S subunit in the 70S ribosome.

One of the primary rRNA binding proteins. Required for association of the 30S and 50S subunits to form the 70S ribosome, for tRNA binding and peptide bond formation. It has been suggested to have peptidyltransferase activity; this is somewhat controversial. Makes several contacts with the 16S rRNA in the 70S ribosome. This chain is Large ribosomal subunit protein uL2, found in Corynebacterium urealyticum (strain ATCC 43042 / DSM 7109).